A 474-amino-acid chain; its full sequence is MLTLKEKEFWFVVGSQQLYGEEALQEVKAQAQTVTDALNESGALPYPIVLKDLAINADQITNVMKEVNYRDEVAGVITWMHTFSPAKMWIRGTKLLQKPLLHLATQFNESIPWDTIDMDFMNLNQSAHGDREYGFINARLNKQNKVVVGYWGKSEVQRQIAEWMDVAAAYNESFNVKVARFGDNMRNVAVTDGDKIEAQIQFGWTVDYFAIGDLVQYVNAVKEEEIDVLFAEYKDSYDFDYGDYSKDDWEASVRVQASYEIAIKRFLDDGGYNAFTSNFEDLYGMKQLPGLAVQRLMGQGYGFAGEGDWKTAALDRLLKVMSHNQSTGFMEDYTYELAEGKEAILQSHMLEVDPTLASTKPKITVFPLGIGDREDPARLVFDGKAGDGVVVSMADFGTHFKLLINEVNAFEPTTPAPNLPVARVLWEVKPNFQDGVKAWIENGGGHHTVVSLNLTTDQVVSYAKLVGLDYIVIK.

The Mn(2+) site is built by Glu306, Glu331, His348, and His447.

The protein belongs to the arabinose isomerase family. Requires Mn(2+) as cofactor.

The enzyme catalyses beta-L-arabinopyranose = L-ribulose. It functions in the pathway carbohydrate degradation; L-arabinose degradation via L-ribulose; D-xylulose 5-phosphate from L-arabinose (bacterial route): step 1/3. Catalyzes the conversion of L-arabinose to L-ribulose. The protein is L-arabinose isomerase of Oceanobacillus iheyensis (strain DSM 14371 / CIP 107618 / JCM 11309 / KCTC 3954 / HTE831).